The primary structure comprises 91 residues: Large ribosomal subunit protein bL31B (91 aa).

This sequence belongs to the bacterial ribosomal protein bL31 family. Type B subfamily. In terms of assembly, part of the 50S ribosomal subunit.

The sequence is that of Large ribosomal subunit protein bL31B from Neisseria gonorrhoeae (strain ATCC 700825 / FA 1090).